Here is a 159-residue protein sequence, read N- to C-terminus: MINYLKSFFLYEIVRGLTLTLKYFFKPKVTINYPYEKSPVSPRFKGEHALRRYENGEERCIACKLCEAVCPAQAIVIESDERDDGSRRTTRYDIDMTKCIYCGLCQEACPVDAIVEGPNFEFASLTHTALIYDKERLLYNGDKWEQELTNKLHKDYQYR.

4Fe-4S ferredoxin-type domains follow at residues 51–80 (RRYE…IESD) and 90–119 (TRYD…EGPN). [4Fe-4S] cluster is bound by residues Cys60, Cys63, Cys66, Cys70, Cys99, Cys102, Cys105, and Cys109.

It belongs to the complex I 23 kDa subunit family. As to quaternary structure, NDH-1 is composed of 14 different subunits. Subunits NuoA, H, J, K, L, M, N constitute the membrane sector of the complex. It depends on [4Fe-4S] cluster as a cofactor.

It is found in the cell inner membrane. The enzyme catalyses a quinone + NADH + 5 H(+)(in) = a quinol + NAD(+) + 4 H(+)(out). In terms of biological role, NDH-1 shuttles electrons from NADH, via FMN and iron-sulfur (Fe-S) centers, to quinones in the respiratory chain. The immediate electron acceptor for the enzyme in this species is believed to be ubiquinone. Couples the redox reaction to proton translocation (for every two electrons transferred, four hydrogen ions are translocated across the cytoplasmic membrane), and thus conserves the redox energy in a proton gradient. This is NADH-quinone oxidoreductase subunit I from Rickettsia typhi (strain ATCC VR-144 / Wilmington).